The chain runs to 790 residues: Nuclear cap-binding protein subunit 1 (790 aa).

Residues 1–26 form a disordered region; it reads MSRRRHSDENDGGQPHKRRKTSDANE. Residues 3–20 carry the Nuclear localization signal motif; that stretch reads RRRHSDENDGGQPHKRRK. Ser-7 is modified (phosphoserine; by RPS6KB1). Thr-21 carries the phosphothreonine; by RPS6KB1 modification. Ser-22 is modified (phosphoserine; by RPS6KB1). Residues 28–240 enclose the MIF4G domain; that stretch reads EDHLESLICK…CLWAQIQKLK (213 aa). Ser-201 is modified (phosphoserine). At Lys-204 the chain carries N6-acetyllysine. Residues 643-713 adopt a coiled-coil conformation; that stretch reads STIRKMNKHV…SEQKNLFLVI (71 aa). Lys-684 participates in a covalent cross-link: Glycyl lysine isopeptide (Lys-Gly) (interchain with G-Cter in SUMO2). Lys-698 carries the post-translational modification N6-acetyllysine.

Belongs to the NCBP1 family. Component of the nuclear cap-binding complex (CBC), a heterodimer composed of NCBP1/CBP80 and NCBP2/CBP20 that interacts with m7GpppG-capped RNA. Found in a U snRNA export complex containing PHAX/RNUXA, NCBP1/CBP80, NCBP2/CBP20, RAN, XPO1 and m7G-capped RNA. Identified in a IGF2BP1-dependent mRNP granule complex containing untranslated mRNAs. Interacts with PHAX/RNUXA, SRRT/ARS2, EIF4G2, IGF2BP1, HNRNPF, HNRNPH1, KIAA0427/CTIF, PARN, DROSHA, UPF1 and ALYREF/THOC4. May interact with EIF4G1; the interaction is however controversial since it is reported by PubMed:11340157, PubMed:15059963 and PubMed:15361857, but is not observed by PubMed:19648179. The large PER complex involved in the repression of transcriptional termination is composed of at least PER2, CDK9, DDX5, DHX9, NCBP1/CBP80 and POLR2A. Component of an alternative nuclear cap-binding complex (CBC) composed of NCBP1/CBP80 and NCBP3. Interacts with METTL3. Interacts with ZFC3H1 in a RNase-insensitive manner. Interacts with MTREX. Interacts with TASOR. Interacts with DHX34; the interaction is RNA-dependent. Interacts with KPNA3. Post-translationally, dephosphorylated at Thr-21 by the PNUTS-PP1 complex during RNA polymerase II transcription pause-release.

The protein localises to the nucleus. It localises to the cytoplasm. Its function is as follows. Component of the cap-binding complex (CBC), which binds cotranscriptionally to the 5'-cap of pre-mRNAs and is involved in various processes such as pre-mRNA splicing, translation regulation, nonsense-mediated mRNA decay, RNA-mediated gene silencing (RNAi) by microRNAs (miRNAs) and mRNA export. The CBC complex is involved in mRNA export from the nucleus via its interaction with ALYREF/THOC4/ALY, leading to the recruitment of the mRNA export machinery to the 5'-end of mRNA and to mRNA export in a 5' to 3' direction through the nuclear pore. The CBC complex is also involved in mediating U snRNA and intronless mRNAs export from the nucleus. The CBC complex is essential for a pioneer round of mRNA translation, before steady state translation when the CBC complex is replaced by cytoplasmic cap-binding protein eIF4E. The pioneer round of mRNA translation mediated by the CBC complex plays a central role in nonsense-mediated mRNA decay (NMD), NMD only taking place in mRNAs bound to the CBC complex, but not on eIF4E-bound mRNAs. The CBC complex enhances NMD in mRNAs containing at least one exon-junction complex (EJC) via its interaction with UPF1, promoting the interaction between UPF1 and UPF2. The CBC complex is also involved in 'failsafe' NMD, which is independent of the EJC complex, while it does not participate in Staufen-mediated mRNA decay (SMD). During cell proliferation, the CBC complex is also involved in microRNAs (miRNAs) biogenesis via its interaction with SRRT/ARS2 and is required for miRNA-mediated RNA interference. The CBC complex also acts as a negative regulator of PARN, thereby acting as an inhibitor of mRNA deadenylation. In the CBC complex, NCBP1/CBP80 does not bind directly capped RNAs (m7GpppG-capped RNA) but is required to stabilize the movement of the N-terminal loop of NCBP2/CBP20 and lock the CBC into a high affinity cap-binding state with the cap structure. Associates with NCBP3 to form an alternative cap-binding complex (CBC) which plays a key role in mRNA export and is particularly important in cellular stress situations such as virus infections. The conventional CBC with NCBP2 binds both small nuclear RNA (snRNA) and messenger (mRNA) and is involved in their export from the nucleus whereas the alternative CBC with NCBP3 does not bind snRNA and associates only with mRNA thereby playing a role only in mRNA export. NCBP1/CBP80 is required for cell growth and viability. The protein is Nuclear cap-binding protein subunit 1 (NCBP1) of Homo sapiens (Human).